Consider the following 147-residue polypeptide: Myoglobin (147 aa).

Residues 2 to 141 (ADHDLVLKCW…VIGDIDGYYK (140 aa)) form the Globin domain. Residue His-60 coordinates nitrite. His-60 contributes to the O2 binding site. His-89 is a binding site for heme b.

Belongs to the globin family. Monomeric.

Its subcellular location is the cytoplasm. The protein resides in the sarcoplasm. It carries out the reaction Fe(III)-heme b-[protein] + nitric oxide + H2O = Fe(II)-heme b-[protein] + nitrite + 2 H(+). The enzyme catalyses H2O2 + AH2 = A + 2 H2O. Functionally, monomeric heme protein which primary function is to store oxygen and facilitate its diffusion within muscle tissues. Reversibly binds oxygen through a pentacoordinated heme iron and enables its timely and efficient release as needed during periods of heightened demand. Depending on the oxidative conditions of tissues and cells, and in addition to its ability to bind oxygen, it also has a nitrite reductase activity whereby it regulates the production of bioactive nitric oxide. Under stress conditions, like hypoxia and anoxia, it also protects cells against reactive oxygen species thanks to its pseudoperoxidase activity. This is Myoglobin (mb) from Danio rerio (Zebrafish).